A 188-amino-acid chain; its full sequence is Elongation factor P (188 aa).

Belongs to the elongation factor P family.

The protein resides in the cytoplasm. The protein operates within protein biosynthesis; polypeptide chain elongation. Functionally, involved in peptide bond synthesis. Stimulates efficient translation and peptide-bond synthesis on native or reconstituted 70S ribosomes in vitro. Probably functions indirectly by altering the affinity of the ribosome for aminoacyl-tRNA, thus increasing their reactivity as acceptors for peptidyl transferase. The chain is Elongation factor P from Chlorobium chlorochromatii (strain CaD3).